We begin with the raw amino-acid sequence, 479 residues long: Zinc metalloproteinase/disintegrin PMMP-1 (479 aa).

Residues 1–20 (MIQVLLVTICLAVFPYQGSS) form the signal peptide. The propeptide occupies 21–188 (IILESGNVND…PIKKASKLVV (168 aa)). The Peptidase M12B domain occupies 194–390 (RYVELVIVAD…HNPQCILNKP (197 aa)). 3 disulfide bridges follow: Cys305/Cys385, Cys345/Cys369, and Cys347/Cys352. His330 contacts Zn(2+). The active site involves Glu331. Residues His334 and His339 each contribute to the Zn(2+) site. Asn368 carries N-linked (GlcNAc...) asparagine glycosylation. Residues 391-408 (LRTDTVSTPVSGNELLEA) constitute a propeptide that is removed on maturation. Positions 398-479 (TPVSGNELLE…ADCPRNGLYG (82 aa)) constitute a Disintegrin domain. 6 cysteine pairs are disulfide-bonded: Cys412–Cys427, Cys414–Cys422, Cys421–Cys444, Cys435–Cys441, Cys440–Cys465, and Cys453–Cys472. Positions 457 to 459 (RGD) match the Cell attachment site motif.

Belongs to the venom metalloproteinase (M12B) family. P-II subfamily. P-IIa sub-subfamily. Monomer. Zn(2+) serves as cofactor. In terms of tissue distribution, expressed by the venom gland.

The protein localises to the secreted. Impairs hemostasis in the envenomed animal. Functionally, inhibits platelet aggregation. This chain is Zinc metalloproteinase/disintegrin PMMP-1, found in Protobothrops mucrosquamatus (Taiwan habu).